We begin with the raw amino-acid sequence, 430 residues long: Maintenance of mitochondrial morphology protein 1 (430 aa).

The Lumenal portion of the chain corresponds to 1-82; the sequence is MTEIDPNINE…ISNTWNFTQG (82 aa). Residues 83–103 form a helical membrane-spanning segment; that stretch reads LVVGQLSVIFLIIIFVKFFVF. Residues 104 to 430 lie on the Cytoplasmic side of the membrane; the sequence is ADSSSSIPSK…AKPKDSDDTL (327 aa). 2 stretches are compositionally biased toward basic and acidic residues: residues 126 to 138 and 335 to 346; these read RDNK…DRHN and ENGKGSSSEDKK. Disordered stretches follow at residues 126 to 154 and 315 to 346; these read RDNK…TDDE and QADQ…EDKK. Residues 178–408 form the SMP-LTD domain; sequence ASESLDWFNV…EPRFQVVKLP (231 aa).

It belongs to the MMM1 family. As to quaternary structure, homodimer. Component of the ER-mitochondria encounter structure (ERMES) or MDM complex, composed of MMM1, MDM10, MDM12 and MDM34. An MMM1 homodimer associates with one molecule of MDM12 on each side in a pairwise head-to-tail manner, and the SMP-LTD domains of MMM1 and MDM12 generate a continuous hydrophobic tunnel for phospholipid trafficking.

It is found in the endoplasmic reticulum membrane. Functionally, component of the ERMES/MDM complex, which serves as a molecular tether to connect the endoplasmic reticulum (ER) and mitochondria. Components of this complex are involved in the control of mitochondrial shape and protein biogenesis, and function in nonvesicular lipid trafficking between the ER and mitochondria. The MDM12-MMM1 subcomplex functions in the major beta-barrel assembly pathway that is responsible for biogenesis of all outer membrane beta-barrel proteins, and acts in a late step after the SAM complex. The MDM10-MDM12-MMM1 subcomplex further acts in the TOM40-specific pathway after the action of the MDM12-MMM1 complex. Essential for establishing and maintaining the structure of mitochondria and maintenance of mtDNA nucleoids. This chain is Maintenance of mitochondrial morphology protein 1, found in Lodderomyces elongisporus (strain ATCC 11503 / CBS 2605 / JCM 1781 / NBRC 1676 / NRRL YB-4239) (Yeast).